The primary structure comprises 290 residues: Nucleoid occlusion protein (290 aa).

The segment at residues 153-172 (EALAQRLGKGQSTIANKLRL) is a DNA-binding region (H-T-H motif).

This sequence belongs to the ParB family.

The protein resides in the cytoplasm. It localises to the nucleoid. Its function is as follows. Effects nucleoid occlusion by binding relatively nonspecifically to DNA and preventing the assembly of the division machinery in the vicinity of the nucleoid, especially under conditions that disturb the cell cycle. It helps to coordinate cell division and chromosome segregation by preventing the formation of the Z ring through the nucleoid, which would cause chromosome breakage. The polypeptide is Nucleoid occlusion protein (Bacillus anthracis (strain A0248)).